Consider the following 720-residue polypeptide: Glycine--tRNA ligase beta subunit (720 aa).

Belongs to the class-II aminoacyl-tRNA synthetase family. As to quaternary structure, tetramer of two alpha and two beta subunits.

The protein resides in the cytoplasm. The catalysed reaction is tRNA(Gly) + glycine + ATP = glycyl-tRNA(Gly) + AMP + diphosphate. In Dinoroseobacter shibae (strain DSM 16493 / NCIMB 14021 / DFL 12), this protein is Glycine--tRNA ligase beta subunit.